We begin with the raw amino-acid sequence, 246 residues long: Probable transcriptional regulatory protein WP1214 (246 aa).

Residues Met1–Ser22 are disordered.

It belongs to the TACO1 family.

The protein resides in the cytoplasm. The sequence is that of Probable transcriptional regulatory protein WP1214 from Wolbachia pipientis subsp. Culex pipiens (strain wPip).